A 462-amino-acid polypeptide reads, in one-letter code: Argininosuccinate lyase (462 aa).

The protein belongs to the lyase 1 family. Argininosuccinate lyase subfamily.

Its subcellular location is the cytoplasm. The enzyme catalyses 2-(N(omega)-L-arginino)succinate = fumarate + L-arginine. It participates in amino-acid biosynthesis; L-arginine biosynthesis; L-arginine from L-ornithine and carbamoyl phosphate: step 3/3. This chain is Argininosuccinate lyase, found in Streptococcus agalactiae serotype V (strain ATCC BAA-611 / 2603 V/R).